The chain runs to 388 residues: Probable acetyl-CoA acetyltransferase (388 aa).

Cys-84 acts as the Acyl-thioester intermediate in catalysis. Lys-187 is covalently cross-linked (Isoglutamyl lysine isopeptide (Lys-Gln) (interchain with Q-Cter in protein Pup)). Active-site proton acceptor residues include His-345 and Cys-375.

This sequence belongs to the thiolase-like superfamily. Thiolase family.

It catalyses the reaction 2 acetyl-CoA = acetoacetyl-CoA + CoA. This Mycolicibacterium smegmatis (strain ATCC 700084 / mc(2)155) (Mycobacterium smegmatis) protein is Probable acetyl-CoA acetyltransferase.